The following is a 483-amino-acid chain: Alginate biosynthesis protein AlgA (483 aa).

The protein belongs to the mannose-6-phosphate isomerase type 2 family. As to quaternary structure, monomer. Co(2+) is required as a cofactor.

The enzyme catalyses D-mannose 6-phosphate = D-fructose 6-phosphate. It catalyses the reaction alpha-D-mannose 1-phosphate + GTP + H(+) = GDP-alpha-D-mannose + diphosphate. Its pathway is nucleotide-sugar biosynthesis; GDP-alpha-D-mannose biosynthesis; GDP-alpha-D-mannose from alpha-D-mannose 1-phosphate (GTP route): step 1/1. It participates in nucleotide-sugar biosynthesis; GDP-alpha-D-mannose biosynthesis; alpha-D-mannose 1-phosphate from D-fructose 6-phosphate: step 1/2. Produces a precursor for alginate polymerization. The alginate layer provides a protective barrier against host immune defenses and antibiotics. This is Alginate biosynthesis protein AlgA (algA) from Pseudomonas fluorescens.